The chain runs to 157 residues: Protein Smg homolog (157 aa).

Belongs to the Smg family.

This is Protein Smg homolog from Xylella fastidiosa (strain M23).